The chain runs to 136 residues: MAKEFSRGQRVAQEMQKEIAIILQREVKDPRVGMATVSGVEVSRDLAYAKVYVTFLNVLTENADPNLVPNGIKALEDASGYIRTLLGKAMRLRVVPELTFAYDNSLVEGMRMSNLVTNVVKNDAERRSASGDDEEA.

The protein belongs to the RbfA family. As to quaternary structure, monomer. Binds 30S ribosomal subunits, but not 50S ribosomal subunits or 70S ribosomes.

The protein localises to the cytoplasm. Functionally, one of several proteins that assist in the late maturation steps of the functional core of the 30S ribosomal subunit. Associates with free 30S ribosomal subunits (but not with 30S subunits that are part of 70S ribosomes or polysomes). Required for efficient processing of 16S rRNA. May interact with the 5'-terminal helix region of 16S rRNA. In Serratia proteamaculans (strain 568), this protein is Ribosome-binding factor A.